A 280-amino-acid polypeptide reads, in one-letter code: MKQVFGVFGDPIAHSLSPAMHNAAFSALGMDCIYHAFRVKPEKLEKAILGAEAMGFGGLNLTVPLKETALKLDCIKPDPLAEKIGAVNTIVFGETGEIKGYNTDGLGAKQALQNSAVEMEGSKIVVTGAGGAARSIAFQLAADGAEITIVNRTEGRAIELAKDISAASLSGNVTGKGLSGLKNLLQDANILINTTTLGMHPNVDTAIATAEDLHPDLTVFDIVYNPLETRLLREAKASGAKTVSGVLMLVYQGAEAFKLWTGIEPPVELMKKTVLEALQV.

Shikimate is bound by residues Ser15–Ser17 and Thr62. Residue Lys66 is the Proton acceptor of the active site. The shikimate site is built by Asn88 and Asp104. Residues Gly128 to Ala132, Asn151 to Arg156, and Ile222 contribute to the NADP(+) site. Tyr224 is a binding site for shikimate. Position 245 (Gly245) interacts with NADP(+).

It belongs to the shikimate dehydrogenase family. In terms of assembly, homodimer.

The catalysed reaction is shikimate + NADP(+) = 3-dehydroshikimate + NADPH + H(+). Its pathway is metabolic intermediate biosynthesis; chorismate biosynthesis; chorismate from D-erythrose 4-phosphate and phosphoenolpyruvate: step 4/7. Involved in the biosynthesis of the chorismate, which leads to the biosynthesis of aromatic amino acids. Catalyzes the reversible NADPH linked reduction of 3-dehydroshikimate (DHSA) to yield shikimate (SA). The chain is Shikimate dehydrogenase (NADP(+)) from Methanosarcina barkeri (strain Fusaro / DSM 804).